The chain runs to 213 residues: NADH-quinone oxidoreductase subunit I (213 aa).

4Fe-4S ferredoxin-type domains are found at residues 74–103 (RFIESENERCIGCGLCEKICISNCIRMETS) and 113–142 (ENYSINLGRCIYCGFCAEVCPELAIVHGTE). Residues Cys83, Cys86, Cys89, Cys93, Cys122, Cys125, Cys128, and Cys132 each contribute to the [4Fe-4S] cluster site.

Belongs to the complex I 23 kDa subunit family. As to quaternary structure, NDH-1 is composed of 14 different subunits. Subunits NuoA, H, J, K, L, M, N constitute the membrane sector of the complex. [4Fe-4S] cluster serves as cofactor.

The protein localises to the cell inner membrane. The enzyme catalyses a quinone + NADH + 5 H(+)(in) = a quinol + NAD(+) + 4 H(+)(out). In terms of biological role, NDH-1 shuttles electrons from NADH, via FMN and iron-sulfur (Fe-S) centers, to quinones in the respiratory chain. The immediate electron acceptor for the enzyme in this species is believed to be ubiquinone. Couples the redox reaction to proton translocation (for every two electrons transferred, four hydrogen ions are translocated across the cytoplasmic membrane), and thus conserves the redox energy in a proton gradient. The protein is NADH-quinone oxidoreductase subunit I of Campylobacter jejuni subsp. jejuni serotype O:23/36 (strain 81-176).